The chain runs to 365 residues: Paraneoplastic antigen Ma2 homolog (365 aa).

An N-acetylalanine modification is found at alanine 2. A disordered region spans residues 336-365 (EEEDAYFEQESREEPGEREGSGCWNNSRNN). Positions 344–355 (QESREEPGEREG) are enriched in basic and acidic residues.

The protein belongs to the PNMA family. As to expression, expressed in the cerebrum, cerebellum and testis.

It localises to the nucleus. Its subcellular location is the nucleolus. In Mus musculus (Mouse), this protein is Paraneoplastic antigen Ma2 homolog (Pnma2).